We begin with the raw amino-acid sequence, 391 residues long: MAEEGSSTKDSESFSVLNWDQVSRLHEVLTEVVPIHGRGNFPTLEITLKDIVQTVRGRLEEAGINVQDVRLNGSAAGHVLVKDNGLGCKDLDLIFHVALPTEAEFQLVRDVVLCSLLNFLPEGVNKLKISPVTLKEAYVQKLVKVCTDTDRWSLISLSNKNGRNVELKFVDSIRRQFEFSVDSFQIILDSLLFFYDCSGNPISEHFHPTVIGESMYGDFEEAFDHLQNRLIATKNPEEIRGGGLLKYSNLLVRDFRPADQEEIKTLERYMCSRFFIDFPDILEQQRKLETYLQNHFSDEERSKYDYLMILRRVVNESTVCLMGHERRQTLNLISLLALRVLAEQNIIPSATNVTCYYQPAPYVSDGNFNNYYIAHPPITYSQPYPTWLPCN.

It belongs to the TENT family. In terms of assembly, interacts with BCCIP and PABPC1; the interaction has no effect on TENT5C poly(A) polymerase function. Interacts with PLK4; this interaction leads to the TENT5C recruitment into the centrosome. Expressed by splenocytes, expression is increased in activated splenocytes.

Its subcellular location is the nucleus. It is found in the cytoplasm. The protein localises to the cytoskeleton. The protein resides in the microtubule organizing center. It localises to the centrosome. The enzyme catalyses RNA(n) + ATP = RNA(n)-3'-adenine ribonucleotide + diphosphate. Functionally, catalyzes the transfer of one adenosine molecule from an ATP to an mRNA poly(A) tail bearing a 3'-OH terminal group and enhances mRNA stability and gene expression. Can also elongate RNA oligos ending with uridine molecule, provided that the sequence is adenosine-rich. Mainly targets mRNAs encoding endoplasmic reticulum-targeted protein. The chain is Terminal nucleotidyltransferase 5C from Mus musculus (Mouse).